The primary structure comprises 54 residues: Ovomucoid (54 aa).

A Kazal-like domain is found at Val4–Cys54. Intrachain disulfides connect Cys6/Cys36, Cys14/Cys33, and Cys22/Cys54. N-linked (GlcNAc...) asparagine glycosylation is present at Asn43.

Its subcellular location is the secreted. This Dendrocygna eytoni (Plumed whistling-duck) protein is Ovomucoid.